Here is a 228-residue protein sequence, read N- to C-terminus: MSATKTLEAVARDRVGKGAARAVRRQGQIPAVIYGGNQAPQAIAIDLIRARTLIYAGGFKTTVFEIDAGGKKTRAIPRDYQLDPVSGVPLHVDFLRVVAGQTVTVDVPVHFVNEDQAPGIKQKGGTLNVALHTVSLEVAPDQIPDAIEVDLAGREIGDVIHASDLRLPAGTYTGEPTDTVANLLPPTVLGADVEAEEAAVAEAQSAESAEGKAEAEAEATNEKNKSEA.

The segment at 196 to 228 (EEAAVAEAQSAESAEGKAEAEAEATNEKNKSEA) is disordered. The segment covering 209–228 (AEGKAEAEAEATNEKNKSEA) has biased composition (basic and acidic residues).

The protein belongs to the bacterial ribosomal protein bL25 family. CTC subfamily. As to quaternary structure, part of the 50S ribosomal subunit; part of the 5S rRNA/L5/L18/L25 subcomplex. Contacts the 5S rRNA. Binds to the 5S rRNA independently of L5 and L18.

Its function is as follows. This is one of the proteins that binds to the 5S RNA in the ribosome where it forms part of the central protuberance. The sequence is that of Large ribosomal subunit protein bL25 from Methylorubrum extorquens (strain CM4 / NCIMB 13688) (Methylobacterium extorquens).